The primary structure comprises 175 residues: Large ribosomal subunit protein uL10 (175 aa).

This sequence belongs to the universal ribosomal protein uL10 family. Part of the ribosomal stalk of the 50S ribosomal subunit. The N-terminus interacts with L11 and the large rRNA to form the base of the stalk. The C-terminus forms an elongated spine to which L12 dimers bind in a sequential fashion forming a multimeric L10(L12)X complex.

In terms of biological role, forms part of the ribosomal stalk, playing a central role in the interaction of the ribosome with GTP-bound translation factors. This Psychrobacter sp. (strain PRwf-1) protein is Large ribosomal subunit protein uL10.